The primary structure comprises 250 residues: Triosephosphate isomerase (250 aa).

A substrate-binding site is contributed by 9-11 (NWK). The active-site Electrophile is H100. E169 (proton acceptor) is an active-site residue. Residues G175, S208, and 229–230 (GG) contribute to the substrate site.

It belongs to the triosephosphate isomerase family. As to quaternary structure, homodimer.

The protein resides in the cytoplasm. It carries out the reaction D-glyceraldehyde 3-phosphate = dihydroxyacetone phosphate. It functions in the pathway carbohydrate biosynthesis; gluconeogenesis. It participates in carbohydrate degradation; glycolysis; D-glyceraldehyde 3-phosphate from glycerone phosphate: step 1/1. Functionally, involved in the gluconeogenesis. Catalyzes stereospecifically the conversion of dihydroxyacetone phosphate (DHAP) to D-glyceraldehyde-3-phosphate (G3P). The polypeptide is Triosephosphate isomerase (Synechococcus sp. (strain JA-2-3B'a(2-13)) (Cyanobacteria bacterium Yellowstone B-Prime)).